Consider the following 227-residue polypeptide: Cytochrome c oxidase subunit 2 (227 aa).

Residues 1-14 are Mitochondrial intermembrane-facing; the sequence is MAYPVQLGFQDAAS. The chain crosses the membrane as a helical span at residues 15 to 45; it reads PIMEELLYFHDHTLMIMFLISSLVLYIISLM. The Mitochondrial matrix segment spans residues 46-59; that stretch reads LTTELMHTNTMDAQ. Residues 60–87 traverse the membrane as a helical segment; it reads EVETVWTILPAAILILIALPSLRILYMM. The Mitochondrial intermembrane segment spans residues 88 to 227; that stretch reads DEITTPSLTL…HFEEWLLSML (140 aa). Cu cation contacts are provided by His-161, Cys-196, Glu-198, Cys-200, His-204, and Met-207. Glu-198 provides a ligand contact to Mg(2+).

This sequence belongs to the cytochrome c oxidase subunit 2 family. As to quaternary structure, component of the cytochrome c oxidase (complex IV, CIV), a multisubunit enzyme composed of 14 subunits. The complex is composed of a catalytic core of 3 subunits MT-CO1, MT-CO2 and MT-CO3, encoded in the mitochondrial DNA, and 11 supernumerary subunits COX4I, COX5A, COX5B, COX6A, COX6B, COX6C, COX7A, COX7B, COX7C, COX8 and NDUFA4, which are encoded in the nuclear genome. The complex exists as a monomer or a dimer and forms supercomplexes (SCs) in the inner mitochondrial membrane with NADH-ubiquinone oxidoreductase (complex I, CI) and ubiquinol-cytochrome c oxidoreductase (cytochrome b-c1 complex, complex III, CIII), resulting in different assemblies (supercomplex SCI(1)III(2)IV(1) and megacomplex MCI(2)III(2)IV(2)). Found in a complex with TMEM177, COA6, COX18, COX20, SCO1 and SCO2. Interacts with TMEM177 in a COX20-dependent manner. Interacts with COX20. Interacts with COX16. Cu cation serves as cofactor.

It is found in the mitochondrion inner membrane. The catalysed reaction is 4 Fe(II)-[cytochrome c] + O2 + 8 H(+)(in) = 4 Fe(III)-[cytochrome c] + 2 H2O + 4 H(+)(out). Functionally, component of the cytochrome c oxidase, the last enzyme in the mitochondrial electron transport chain which drives oxidative phosphorylation. The respiratory chain contains 3 multisubunit complexes succinate dehydrogenase (complex II, CII), ubiquinol-cytochrome c oxidoreductase (cytochrome b-c1 complex, complex III, CIII) and cytochrome c oxidase (complex IV, CIV), that cooperate to transfer electrons derived from NADH and succinate to molecular oxygen, creating an electrochemical gradient over the inner membrane that drives transmembrane transport and the ATP synthase. Cytochrome c oxidase is the component of the respiratory chain that catalyzes the reduction of oxygen to water. Electrons originating from reduced cytochrome c in the intermembrane space (IMS) are transferred via the dinuclear copper A center (CU(A)) of subunit 2 and heme A of subunit 1 to the active site in subunit 1, a binuclear center (BNC) formed by heme A3 and copper B (CU(B)). The BNC reduces molecular oxygen to 2 water molecules using 4 electrons from cytochrome c in the IMS and 4 protons from the mitochondrial matrix. The chain is Cytochrome c oxidase subunit 2 (MT-CO2) from Hapalemur griseus (Gray gentle lemur).